A 149-amino-acid polypeptide reads, in one-letter code: Calmodulin-2 (149 aa).

An N-acetylalanine modification is found at A2. EF-hand domains are found at residues 8–43 (EQIAEFKEAFSLFDKDGDGCITTKELGTVMRSLGQN), 44–79 (PTEAELQDMISEVDADQNGTIDFPEFLNLMARKMKD), 81–116 (DSEEELKEAFKVFDKDQNGYISAADVRHVMTNLGEK), and 117–149 (LTDEEVDEMIREADMDGDGQVNYEEFVRMMLAK). Ca(2+) contacts are provided by D21, D23, D25, C27, E32, D57, D59, N61, T63, E68, D94, D96, N98, Y100, and D105. Position 116 is an N6,N6,N6-trimethyllysine (K116). Ca(2+) contacts are provided by D130, D132, D134, Q136, and E141.

The protein belongs to the calmodulin family.

Calmodulin mediates the control of a large number of enzymes, ion channels and other proteins by Ca(2+). Among the enzymes to be stimulated by the calmodulin-Ca(2+) complex are a number of protein kinases and phosphatases. In Petunia hybrida (Petunia), this protein is Calmodulin-2 (CAM72).